A 385-amino-acid chain; its full sequence is Trehalose-phosphate phosphatase A (385 aa).

The segment at 1 to 21 is disordered; it reads MDMKSGHSSPVMTDSPPISNS.

Belongs to the trehalose phosphatase family. It depends on a divalent metal cation as a cofactor. Expressed in flowers.

The enzyme catalyses alpha,alpha-trehalose 6-phosphate + H2O = alpha,alpha-trehalose + phosphate. It participates in glycan biosynthesis; trehalose biosynthesis. Functionally, removes the phosphate from trehalose 6-phosphate to produce free trehalose. Trehalose accumulation in plant may improve abiotic stress tolerance. The polypeptide is Trehalose-phosphate phosphatase A (TPPA) (Arabidopsis thaliana (Mouse-ear cress)).